The chain runs to 87 residues: RNA-binding protein Hfq (87 aa).

One can recognise a Sm domain in the interval 9–68; it reads DPFLNALRRERIPVSIFLVNGIKLQGKIQSFDQFVILLENTVNQMVYKHAISTVVPARAV.

It belongs to the Hfq family. As to quaternary structure, homohexamer.

Functionally, RNA chaperone that binds small regulatory RNA (sRNAs) and mRNAs to facilitate mRNA translational regulation in response to envelope stress, environmental stress and changes in metabolite concentrations. Also binds with high specificity to tRNAs. In Pseudoalteromonas translucida (strain TAC 125), this protein is RNA-binding protein Hfq.